We begin with the raw amino-acid sequence, 425 residues long: Dihydroorotase (425 aa).

Residues histidine 61 and histidine 63 each coordinate Zn(2+). Substrate contacts are provided by residues 63–65 and asparagine 95; that span reads HLR. The Zn(2+) site is built by aspartate 153, histidine 180, and histidine 233. Asparagine 279 contacts substrate. Aspartate 306 serves as a coordination point for Zn(2+). The active site involves aspartate 306. Substrate is bound at residue histidine 310.

Belongs to the metallo-dependent hydrolases superfamily. DHOase family. Class I DHOase subfamily. Requires Zn(2+) as cofactor.

It carries out the reaction (S)-dihydroorotate + H2O = N-carbamoyl-L-aspartate + H(+). It functions in the pathway pyrimidine metabolism; UMP biosynthesis via de novo pathway; (S)-dihydroorotate from bicarbonate: step 3/3. Catalyzes the reversible cyclization of carbamoyl aspartate to dihydroorotate. The chain is Dihydroorotase from Geotalea daltonii (strain DSM 22248 / JCM 15807 / FRC-32) (Geobacter daltonii).